The sequence spans 184 residues: Probable RNA 2'-phosphotransferase (184 aa).

It belongs to the KptA/TPT1 family.

Removes the 2'-phosphate from RNA via an intermediate in which the phosphate is ADP-ribosylated by NAD followed by a presumed transesterification to release the RNA and generate ADP-ribose 1''-2''-cyclic phosphate (APPR&gt;P). May function as an ADP-ribosylase. The polypeptide is Probable RNA 2'-phosphotransferase (Burkholderia pseudomallei (strain K96243)).